The sequence spans 376 residues: UDP-N-acetylenolpyruvoylglucosamine reductase (376 aa).

An FAD-binding PCMH-type domain is found at 48–219; it reads VGGPARHLVI…LDVTMQFNLG (172 aa). R196 is a catalytic residue. Residue S274 is the Proton donor of the active site. The active site involves E368.

This sequence belongs to the MurB family. FAD is required as a cofactor.

It localises to the cytoplasm. The enzyme catalyses UDP-N-acetyl-alpha-D-muramate + NADP(+) = UDP-N-acetyl-3-O-(1-carboxyvinyl)-alpha-D-glucosamine + NADPH + H(+). The protein operates within cell wall biogenesis; peptidoglycan biosynthesis. Its function is as follows. Cell wall formation. This chain is UDP-N-acetylenolpyruvoylglucosamine reductase, found in Cutibacterium acnes (strain DSM 16379 / KPA171202) (Propionibacterium acnes).